Here is a 237-residue protein sequence, read N- to C-terminus: Synapse differentiation-inducing gene protein 1-like (237 aa).

3 disordered regions span residues 1-23, 84-111, and 127-148; these read MESLSELQNPLLPRSPTHLHRPY, AGSCETSFTEAREPLAGPAEEGSEPGQA, and ELQGQEDSQEEESDGTSSESEC. At 1 to 161 the chain is on the extracellular side; the sequence is MESLSELQNP…FLTLPPRDHL (161 aa). Residues 129-148 are compositionally biased toward acidic residues; it reads QGQEDSQEEESDGTSSESEC. A helical membrane pass occupies residues 162–182; the sequence is GLTLFSMLCCFWPLGIAAFYF. Topologically, residues 183-204 are cytoplasmic; that stretch reads SQGTSKAISKGDFRLASTTSRR. The chain crosses the membrane as a helical span at residues 205 to 225; the sequence is ALFLATLSIAVGAGLYVAVVV. At 226-237 the chain is on the extracellular side; that stretch reads ALAAYMSQNGHG.

Belongs to the CD225/Dispanin family. As to expression, expression is restricted to the caudate-putamen. Down-regulated in R6/2 transgenic mice, a model for Huntington disease.

Its subcellular location is the membrane. The protein localises to the golgi apparatus. It localises to the cis-Golgi network. This Mus musculus (Mouse) protein is Synapse differentiation-inducing gene protein 1-like (Syndig1l).